Reading from the N-terminus, the 117-residue chain is MSESKRKYYLPYEVRQXFDAVAGRIKYMICQFEHEHVTGPYDAVILFDGLLLRLKDLAENDFIDERIEQVKNVYYQVGKFSDNIVWNYEVHRYYHPDEIVDFIEVIYDSLKKIYEIE.

This is an uncharacterized protein from Acidianus convivator (ABV).